We begin with the raw amino-acid sequence, 186 residues long: Peptidyl-tRNA hydrolase (186 aa).

Tyrosine 13 contributes to the tRNA binding site. The active-site Proton acceptor is the histidine 18. 3 residues coordinate tRNA: tyrosine 59, asparagine 61, and asparagine 107.

It belongs to the PTH family. As to quaternary structure, monomer.

The protein localises to the cytoplasm. It catalyses the reaction an N-acyl-L-alpha-aminoacyl-tRNA + H2O = an N-acyl-L-amino acid + a tRNA + H(+). Hydrolyzes ribosome-free peptidyl-tRNAs (with 1 or more amino acids incorporated), which drop off the ribosome during protein synthesis, or as a result of ribosome stalling. In terms of biological role, catalyzes the release of premature peptidyl moieties from peptidyl-tRNA molecules trapped in stalled 50S ribosomal subunits, and thus maintains levels of free tRNAs and 50S ribosomes. In Thermotoga maritima (strain ATCC 43589 / DSM 3109 / JCM 10099 / NBRC 100826 / MSB8), this protein is Peptidyl-tRNA hydrolase.